We begin with the raw amino-acid sequence, 69 residues long: Bowman-Birk type proteinase inhibitor A2 (69 aa).

4 disulfide bridges follow: Cys-12–Cys-31, Cys-18–Cys-29, Cys-38–Cys-45, and Cys-42–Cys-59.

This sequence belongs to the Bowman-Birk serine protease inhibitor family. As to expression, expressed in bulb (at protein level).

Functionally, serine protease inhibitor. The protein is Bowman-Birk type proteinase inhibitor A2 of Hyacinthus orientalis (Common hyacinth).